The chain runs to 142 residues: Small ribosomal subunit protein uS19 (142 aa).

The residue at position 2 (Ser-2) is an N-acetylserine. Residues Lys-24, Lys-35, and Lys-64 each participate in a glycyl lysine isopeptide (Lys-Gly) (interchain with G-Cter in ubiquitin) cross-link.

This sequence belongs to the universal ribosomal protein uS19 family. As to quaternary structure, component of the small ribosomal subunit (SSU). Mature yeast ribosomes consist of a small (40S) and a large (60S) subunit. The 40S small subunit contains 1 molecule of ribosomal RNA (18S rRNA) and 33 different proteins (encoded by 57 genes). The large 60S subunit contains 3 rRNA molecules (25S, 5.8S and 5S rRNA) and 46 different proteins (encoded by 81 genes).

Its subcellular location is the cytoplasm. Its function is as follows. Component of the ribosome, a large ribonucleoprotein complex responsible for the synthesis of proteins in the cell. The small ribosomal subunit (SSU) binds messenger RNAs (mRNAs) and translates the encoded message by selecting cognate aminoacyl-transfer RNA (tRNA) molecules. The large subunit (LSU) contains the ribosomal catalytic site termed the peptidyl transferase center (PTC), which catalyzes the formation of peptide bonds, thereby polymerizing the amino acids delivered by tRNAs into a polypeptide chain. The nascent polypeptides leave the ribosome through a tunnel in the LSU and interact with protein factors that function in enzymatic processing, targeting, and the membrane insertion of nascent chains at the exit of the ribosomal tunnel. uS19 is involved in the nuclear export of the small ribosomal subunit precursor. Has a role in the late stage of the assembly of pre-40S particles within the nucleus and controls their export to the cytoplasm. In Saccharomyces cerevisiae (strain ATCC 204508 / S288c) (Baker's yeast), this protein is Small ribosomal subunit protein uS19.